Here is a 172-residue protein sequence, read N- to C-terminus: Shikimate kinase (172 aa).

11–16 is an ATP binding site; that stretch reads GCGKST. S15 is a binding site for Mg(2+). Residues D33, R57, and G80 each contribute to the substrate site. R120 provides a ligand contact to ATP. R142 is a binding site for substrate. R158 lines the ATP pocket.

Belongs to the shikimate kinase family. As to quaternary structure, monomer. Mg(2+) serves as cofactor.

It localises to the cytoplasm. It carries out the reaction shikimate + ATP = 3-phosphoshikimate + ADP + H(+). It participates in metabolic intermediate biosynthesis; chorismate biosynthesis; chorismate from D-erythrose 4-phosphate and phosphoenolpyruvate: step 5/7. Functionally, catalyzes the specific phosphorylation of the 3-hydroxyl group of shikimic acid using ATP as a cosubstrate. This chain is Shikimate kinase, found in Flavobacterium johnsoniae (strain ATCC 17061 / DSM 2064 / JCM 8514 / BCRC 14874 / CCUG 350202 / NBRC 14942 / NCIMB 11054 / UW101) (Cytophaga johnsonae).